The following is a 450-amino-acid chain: MGALFGTDGVRGLANEELSPELAFKLGRAGAFVLQEETGARALVIGRDTRLSGDMLEAALVAGICSVGVDVIRVGVLPTPAIAYLSRAPEAGGGVVISASHNPYEDNGIKFFGANGYKLPDRLEDRIEHLVLTAGGALPTPSGIGVGRVREMPDAMERYVRFACGTGPSDLAGLKIVVDCANGAAYQVAPQVLGRLGASVVPLFDTPDGTNINAGCGSTHPHVLQQAVPAEGADLGLAFDGDADRLIAVDEHGRLVDGDHLLVICGRHMRRHGRLAGNTMVVTVMSNLGLHLALREAGIRVLQTKVGDRYVLEEMLRSGCCLGGEQSGHIIFTEYNTTGDGIITALQLLKVMRETGRPLSQLAAQMERLPQLLENVRVRDRNAVMSSPALWEAIARYEHGLNGEGRILVRPSGTEPLVRVMAEARNETLLTKVVEELVRVVTEIDRQQAG.

Residue Ser-100 is the Phosphoserine intermediate of the active site. Ser-100, Asp-240, Asp-242, and Asp-244 together coordinate Mg(2+). Position 100 is a phosphoserine (Ser-100).

This sequence belongs to the phosphohexose mutase family. It depends on Mg(2+) as a cofactor. In terms of processing, activated by phosphorylation.

The enzyme catalyses alpha-D-glucosamine 1-phosphate = D-glucosamine 6-phosphate. Catalyzes the conversion of glucosamine-6-phosphate to glucosamine-1-phosphate. This Desulforudis audaxviator (strain MP104C) protein is Phosphoglucosamine mutase.